The chain runs to 438 residues: Phospholipase D Y (438 aa).

The first 19 residues, 1–19 (MIINRLFIIIVLFFVNVNS), serve as a signal peptide directing secretion. Asn-50 is a glycosylation site (N-linked (GlcNAc...) asparagine). The PLD phosphodiesterase 1 domain maps to 145–172 (GSGVLHTKLIIIDESSAYVGSANADWSS). Catalysis depends on residues His-150, Lys-152, and Asp-157. 3 N-linked (GlcNAc...) asparagine glycosylation sites follow: Asn-223, Asn-336, and Asn-394. A PLD phosphodiesterase 2 domain is found at 373 to 399 (YTRVNHAKFMVTEKQSYVGTSNWSQDY).

It belongs to the phospholipase D family.

The enzyme catalyses a 1,2-diacyl-sn-glycero-3-phosphocholine + H2O = a 1,2-diacyl-sn-glycero-3-phosphate + choline + H(+). Inhibited by butan-1-ol. Its function is as follows. Hydrolyzes membrane phospholipids, such as PtdCho (phosphatidylcholine), producing the free headgroup and PtdOH (phosphatidic acid; signaling molecule on its own). In Dictyostelium discoideum (Social amoeba), this protein is Phospholipase D Y (pldY).